Consider the following 96-residue polypeptide: Putative pterin-4-alpha-carbinolamine dehydratase (96 aa).

Belongs to the pterin-4-alpha-carbinolamine dehydratase family.

It catalyses the reaction (4aS,6R)-4a-hydroxy-L-erythro-5,6,7,8-tetrahydrobiopterin = (6R)-L-erythro-6,7-dihydrobiopterin + H2O. The polypeptide is Putative pterin-4-alpha-carbinolamine dehydratase (Prochlorococcus marinus subsp. pastoris (strain CCMP1986 / NIES-2087 / MED4)).